A 213-amino-acid chain; its full sequence is Thiopurine S-methyltransferase (213 aa).

S-adenosyl-L-methionine is bound by residues Trp-10, Leu-45, Glu-66, and Arg-121.

This sequence belongs to the class I-like SAM-binding methyltransferase superfamily. TPMT family.

It is found in the cytoplasm. It catalyses the reaction S-adenosyl-L-methionine + a thiopurine = S-adenosyl-L-homocysteine + a thiopurine S-methylether.. The sequence is that of Thiopurine S-methyltransferase from Aliivibrio fischeri (strain MJ11) (Vibrio fischeri).